A 333-amino-acid polypeptide reads, in one-letter code: MLKVGYKASAEQFGPRDLVEYAVRAEEVGLDSVWVSDHFLPWRHEGGHAPWALAWMPAVAERTKRVQIGTSVLTPTFRYNPAVIAQAFATMSLLSNGRVILGVGSGEALNEIAVSGREWPEFKERFARLRESIKLIRELWTSDNVNFKGDYYELVDAKIYDRPEQPVPVYIAAGGPVVAKYAGRAGDGFICTSGKGMELYTDKLMPAVKEGAEAAEKTVEDVDRTIEIKLSYDRDHEKALENTRFWAPLSLSAEQKHSVSSAEEMERLADELPIDQVAKRWIVASDPDEAVAQIKPYLDAGLNHLVFHGPGHDQERFLTQFSEDVLPKLRALG.

Asp-37 is a binding site for coenzyme F420-(gamma-Glu)n. His-38 functions as the Proton donor in the catalytic mechanism. Coenzyme F420-(gamma-Glu)n is bound by residues Thr-74 and 105–106 (SG). Glu-107 serves as the catalytic Proton acceptor. Coenzyme F420-(gamma-Glu)n contacts are provided by residues Asn-110, 174-175 (GG), and 177-178 (VV). Substrate-binding residues include Thr-192, Lys-195, Lys-256, and Arg-280.

The protein belongs to the F420-dependent glucose-6-phosphate dehydrogenase family. In terms of assembly, homodimer.

The enzyme catalyses oxidized coenzyme F420-(gamma-L-Glu)(n) + D-glucose 6-phosphate + H(+) = 6-phospho-D-glucono-1,5-lactone + reduced coenzyme F420-(gamma-L-Glu)(n). Its function is as follows. Catalyzes the coenzyme F420-dependent oxidation of glucose 6-phosphate (G6P) to 6-phosphogluconolactone. The sequence is that of F420-dependent glucose-6-phosphate dehydrogenase from Amycolatopsis mediterranei (strain U-32).